Consider the following 262-residue polypeptide: Small ribosomal subunit protein uS2 (262 aa).

The disordered stretch occupies residues 236-262 (AGGAAEAPAAEDVQTEEAAAPEADSAE).

It belongs to the universal ribosomal protein uS2 family.

The protein is Small ribosomal subunit protein uS2 of Psychrobacter sp. (strain PRwf-1).